The primary structure comprises 211 residues: Large ribosomal subunit protein uL3 (211 aa).

Position 150 is an N5-methylglutamine (glutamine 150).

Belongs to the universal ribosomal protein uL3 family. In terms of assembly, part of the 50S ribosomal subunit. Forms a cluster with proteins L14 and L19. In terms of processing, methylated by PrmB.

One of the primary rRNA binding proteins, it binds directly near the 3'-end of the 23S rRNA, where it nucleates assembly of the 50S subunit. The protein is Large ribosomal subunit protein uL3 of Pseudomonas entomophila (strain L48).